The sequence spans 572 residues: 2-succinyl-5-enolpyruvyl-6-hydroxy-3-cyclohexene-1-carboxylate synthase (572 aa).

The protein belongs to the TPP enzyme family. MenD subfamily. Homodimer. Mg(2+) serves as cofactor. Requires Mn(2+) as cofactor. The cofactor is thiamine diphosphate.

It carries out the reaction isochorismate + 2-oxoglutarate + H(+) = 5-enolpyruvoyl-6-hydroxy-2-succinyl-cyclohex-3-ene-1-carboxylate + CO2. Its pathway is quinol/quinone metabolism; 1,4-dihydroxy-2-naphthoate biosynthesis; 1,4-dihydroxy-2-naphthoate from chorismate: step 2/7. It participates in quinol/quinone metabolism; menaquinone biosynthesis. Its function is as follows. Catalyzes the thiamine diphosphate-dependent decarboxylation of 2-oxoglutarate and the subsequent addition of the resulting succinic semialdehyde-thiamine pyrophosphate anion to isochorismate to yield 2-succinyl-5-enolpyruvyl-6-hydroxy-3-cyclohexene-1-carboxylate (SEPHCHC). The protein is 2-succinyl-5-enolpyruvyl-6-hydroxy-3-cyclohexene-1-carboxylate synthase of Aeromonas salmonicida (strain A449).